The sequence spans 148 residues: Large ribosomal subunit protein bL9 (148 aa).

The protein belongs to the bacterial ribosomal protein bL9 family.

In terms of biological role, binds to the 23S rRNA. The protein is Large ribosomal subunit protein bL9 of Acetivibrio thermocellus (strain ATCC 27405 / DSM 1237 / JCM 9322 / NBRC 103400 / NCIMB 10682 / NRRL B-4536 / VPI 7372) (Clostridium thermocellum).